The chain runs to 297 residues: Bifunctional protein FolD (297 aa).

NADP(+)-binding positions include 168–170 (GRG), T195, and V236.

It belongs to the tetrahydrofolate dehydrogenase/cyclohydrolase family. In terms of assembly, homodimer.

It carries out the reaction (6R)-5,10-methylene-5,6,7,8-tetrahydrofolate + NADP(+) = (6R)-5,10-methenyltetrahydrofolate + NADPH. The catalysed reaction is (6R)-5,10-methenyltetrahydrofolate + H2O = (6R)-10-formyltetrahydrofolate + H(+). The protein operates within one-carbon metabolism; tetrahydrofolate interconversion. Its function is as follows. Catalyzes the oxidation of 5,10-methylenetetrahydrofolate to 5,10-methenyltetrahydrofolate and then the hydrolysis of 5,10-methenyltetrahydrofolate to 10-formyltetrahydrofolate. The polypeptide is Bifunctional protein FolD (Bifidobacterium animalis subsp. lactis (strain AD011)).